The primary structure comprises 582 residues: Sulfite reductase [NADPH] hemoprotein beta-component (582 aa).

Residues 1–12 show a composition bias toward basic and acidic residues; the sequence is MDLKVKVDRSRD. Residues 1 to 26 are disordered; the sequence is MDLKVKVDRSRDVSQPLDKLGPDETL. C447, C453, C492, and C496 together coordinate [4Fe-4S] cluster. C496 is a binding site for siroheme.

Belongs to the nitrite and sulfite reductase 4Fe-4S domain family. As to quaternary structure, alpha(8)-beta(8). The alpha component is a flavoprotein, the beta component is a hemoprotein. Siroheme is required as a cofactor. It depends on [4Fe-4S] cluster as a cofactor.

It carries out the reaction hydrogen sulfide + 3 NADP(+) + 3 H2O = sulfite + 3 NADPH + 4 H(+). The protein operates within sulfur metabolism; hydrogen sulfide biosynthesis; hydrogen sulfide from sulfite (NADPH route): step 1/1. In terms of biological role, component of the sulfite reductase complex that catalyzes the 6-electron reduction of sulfite to sulfide. This is one of several activities required for the biosynthesis of L-cysteine from sulfate. The polypeptide is Sulfite reductase [NADPH] hemoprotein beta-component (Afipia carboxidovorans (strain ATCC 49405 / DSM 1227 / KCTC 32145 / OM5) (Oligotropha carboxidovorans)).